Here is a 430-residue protein sequence, read N- to C-terminus: CinA-like protein (430 aa).

The protein belongs to the CinA family.

In Prochlorococcus marinus (strain NATL1A), this protein is CinA-like protein.